Reading from the N-terminus, the 450-residue chain is Flavin-containing monooxygenase FMO GS-OX-like 5 (450 aa).

FAD is bound at residue 17 to 22 (GAGPAG). 215-220 (GNSSSA) serves as a coordination point for NADP(+).

Belongs to the FMO family. Requires FAD as cofactor.

Catalyzes the conversion of methylthioalkyl glucosinolates of any chain length into methylsulfinylalkyl glucosinolates. This chain is Flavin-containing monooxygenase FMO GS-OX-like 5, found in Arabidopsis thaliana (Mouse-ear cress).